Reading from the N-terminus, the 211-residue chain is MQLVERFLCEPFPPLAQRIIQEGVVVNDRILKIDHFLNHRIDTDLMSAIGVELATRLQPFAAELILTAEASGIPPALATALAARLPLVYAKKYDPDVPVPALTRHIHSPTRDRQVQLAISARFIPAGSRVAIVDDFLANGRTALALADMVYEAGATVVAAAFVVEKQFQEGRLLLQKLGVPIISLAQITRFVDGRPLIYGWPSSVPGQSDG.

2 residues coordinate xanthine: L31 and N38. 138 to 142 (ANGRT) is a binding site for 5-phospho-alpha-D-ribose 1-diphosphate. K166 lines the xanthine pocket.

This sequence belongs to the purine/pyrimidine phosphoribosyltransferase family. Xpt subfamily. In terms of assembly, homodimer.

It localises to the cytoplasm. The catalysed reaction is XMP + diphosphate = xanthine + 5-phospho-alpha-D-ribose 1-diphosphate. Its pathway is purine metabolism; XMP biosynthesis via salvage pathway; XMP from xanthine: step 1/1. Functionally, converts the preformed base xanthine, a product of nucleic acid breakdown, to xanthosine 5'-monophosphate (XMP), so it can be reused for RNA or DNA synthesis. The sequence is that of Xanthine phosphoribosyltransferase from Chloroflexus aurantiacus (strain ATCC 29364 / DSM 637 / Y-400-fl).